We begin with the raw amino-acid sequence, 506 residues long: Ribose import ATP-binding protein RbsA 2 (506 aa).

ABC transporter domains are found at residues 7-242 (LEMR…VGRP) and 250-497 (ERDI…TGVN). Residue 39–46 (GENGAGKS) coordinates ATP.

Belongs to the ABC transporter superfamily. Ribose importer (TC 3.A.1.2.1) family. The complex is composed of an ATP-binding protein (RbsA), two transmembrane proteins (RbsC) and a solute-binding protein (RbsB).

The protein localises to the cell inner membrane. The catalysed reaction is D-ribose(out) + ATP + H2O = D-ribose(in) + ADP + phosphate + H(+). Functionally, part of the ABC transporter complex RbsABC involved in ribose import. Responsible for energy coupling to the transport system. The protein is Ribose import ATP-binding protein RbsA 2 of Escherichia coli O157:H7.